The following is a 406-amino-acid chain: NADH-ubiquinone oxidoreductase 49 kDa subunit (406 aa).

It belongs to the complex I 49 kDa subunit family. Complex I is composed of 45 different subunits. Component of the iron-sulfur (IP) fragment of the enzyme.

It localises to the mitochondrion inner membrane. It carries out the reaction a ubiquinone + NADH + 5 H(+)(in) = a ubiquinol + NAD(+) + 4 H(+)(out). Its function is as follows. Core subunit of the mitochondrial membrane respiratory chain NADH dehydrogenase (Complex I) that is believed to belong to the minimal assembly required for catalysis. Complex I functions in the transfer of electrons from NADH to the respiratory chain. The immediate electron acceptor for the enzyme is believed to be ubiquinone. The protein is NADH-ubiquinone oxidoreductase 49 kDa subunit (nad7) of Dictyostelium citrinum (Slime mold).